The primary structure comprises 349 residues: UPF0324 inner membrane protein YeiH (349 aa).

The Periplasmic portion of the chain corresponds to 1 to 12; that stretch reads MTNITLQKQHRT. Residues 13-32 traverse the membrane as a helical segment; the sequence is LWHFIPGLALSAVITGVALW. Over 33–35 the chain is Cytoplasmic; that stretch reads GGS. A helical membrane pass occupies residues 36–58; that stretch reads IPAVAGAGFSALTLAILLGMVLG. Over 59 to 99 the chain is Periplasmic; the sequence is NTIYPHIWKSCDGGVLFAKQYLLRLGIILYGFRLTFSQIAD. A helical membrane pass occupies residues 100–122; that stretch reads VGISGIIIDVLTLSSTFLLACFL. The Cytoplasmic portion of the chain corresponds to 123-131; sequence GQKVFGLDK. A helical membrane pass occupies residues 132–151; sequence HTSWLIGAGSSICGAAAVLA. At 152–162 the chain is on the periplasmic side; sequence TEPVVKAEASK. Residues 163–185 traverse the membrane as a helical segment; sequence VTVAVATVVIFGTVAIFLYPAIY. At 186–261 the chain is on the cytoplasmic side; the sequence is PLMSQWFSPE…SGTNSGEKSK (76 aa). A helical transmembrane segment spans residues 262–283; that stretch reads ITIPWFAILFIVVAIFNSFHLL. The Periplasmic portion of the chain corresponds to 284-289; sequence PQSVVN. Residues 290 to 312 form a helical membrane-spanning segment; the sequence is MLVTLDTFLLAMAMAALGLTTHV. Over 313 to 321 the chain is Cytoplasmic; sequence SALKKAGAK. A helical membrane pass occupies residues 322–344; the sequence is PLLMALVLFAWLIVGGGAINYVI. Residues 345 to 349 are Periplasmic-facing; the sequence is QSVIA.

This sequence belongs to the UPF0324 family.

Its subcellular location is the cell inner membrane. The sequence is that of UPF0324 inner membrane protein YeiH (yeiH) from Escherichia coli O6:H1 (strain CFT073 / ATCC 700928 / UPEC).